We begin with the raw amino-acid sequence, 393 residues long: S-adenosylmethionine synthase 2 (393 aa).

Glutamate 9 contacts Mg(2+). Histidine 15 lines the ATP pocket. Glutamate 43 is a binding site for K(+). L-methionine-binding residues include glutamate 56 and glutamine 99. ATP contacts are provided by residues 167-169 (DGK), 235-238 (SGRF), aspartate 246, 252-253 (RK), alanine 269, lysine 273, and lysine 277. Aspartate 246 contacts L-methionine. Residue lysine 277 coordinates L-methionine.

The protein belongs to the AdoMet synthase family. As to quaternary structure, homotetramer. Requires Mn(2+) as cofactor. Mg(2+) serves as cofactor. The cofactor is Co(2+). It depends on K(+) as a cofactor. In terms of tissue distribution, mostly expressed in flowers, seedpods and roots, and, to a lower extent, in stems and leaves.

It is found in the cytoplasm. The catalysed reaction is L-methionine + ATP + H2O = S-adenosyl-L-methionine + phosphate + diphosphate. Its pathway is amino-acid biosynthesis; S-adenosyl-L-methionine biosynthesis; S-adenosyl-L-methionine from L-methionine: step 1/1. Its function is as follows. Catalyzes the formation of S-adenosylmethionine from methionine and ATP. The reaction comprises two steps that are both catalyzed by the same enzyme: formation of S-adenosylmethionine (AdoMet) and triphosphate, and subsequent hydrolysis of the triphosphate. The chain is S-adenosylmethionine synthase 2 (MSAMS2) from Brassica juncea (Indian mustard).